The chain runs to 404 residues: Voltage-gated potassium channel subunit beta-3 (404 aa).

Positions 1 to 14 (MQVSIACTEQNLRS) are enriched in polar residues. Residues 1–78 (MQVSIACTEQ…RESTGRGTGM (78 aa)) are disordered. Gly residues predominate over residues 28–50 (PGGGNGGPVGGGHGNPPGGGGLG). Thr-97, Trp-98, Gln-104, and Asp-126 together coordinate NADP(+). Tyr-131 acts as the Proton donor/acceptor in catalysis. Positions 199, 229, 230, 255, 284, 285, 286, 287, 288, 289, 295, 305, 364, 366, 370, and 373 each coordinate NADP(+).

This sequence belongs to the shaker potassium channel beta subunit family. In terms of assembly, forms heteromultimeric complex with alpha subunits. Interacts with KCNA5 and KCNB2. In terms of tissue distribution, predominantly expressed in brain. Strongest expression in olfactory bulb and thalamic nuclei. Not detected in heart, spleen, lung, liver, skeletal muscle, kidney and testis.

The protein resides in the cytoplasm. Regulatory subunit of the voltage-gated potassium (Kv) channels composed of pore-forming and potassium-conducting alpha subunits and of regulatory beta subunits. The beta-3/KCNAB3 subunit may mediate closure of potassium channels. Inactivates Kv1.4/KCNA4 alpha subunit-containing Kv channel current but not Kv1.1/KCNA1 or Kv1.5/KCNA5 channels. May display nicotinamide adenine dinucleotide phosphate (NADPH)-dependent aldoketoreductase activity. The binding of oxidized and reduced NADP(H) cofactors may be required for the regulation of potassium channel activity. This Rattus norvegicus (Rat) protein is Voltage-gated potassium channel subunit beta-3.